The primary structure comprises 878 residues: Alanine--tRNA ligase (878 aa).

Residues His567, His571, Cys668, and His672 each coordinate Zn(2+).

Belongs to the class-II aminoacyl-tRNA synthetase family. Zn(2+) serves as cofactor.

Its subcellular location is the cytoplasm. It carries out the reaction tRNA(Ala) + L-alanine + ATP = L-alanyl-tRNA(Ala) + AMP + diphosphate. Catalyzes the attachment of alanine to tRNA(Ala) in a two-step reaction: alanine is first activated by ATP to form Ala-AMP and then transferred to the acceptor end of tRNA(Ala). Also edits incorrectly charged Ser-tRNA(Ala) and Gly-tRNA(Ala) via its editing domain. In Magnetococcus marinus (strain ATCC BAA-1437 / JCM 17883 / MC-1), this protein is Alanine--tRNA ligase.